The sequence spans 364 residues: Paraneoplastic antigen Ma2 homolog (364 aa).

The residue at position 2 (alanine 2) is an N-acetylalanine. A compositionally biased stretch (acidic residues) spans 335–351 (EEEEATFENENTEEPEG). The segment at 335–364 (EEEEATFENENTEEPEGGDGYGHWGNEAND) is disordered.

It belongs to the PNMA family.

The protein resides in the nucleus. The protein localises to the nucleolus. The sequence is that of Paraneoplastic antigen Ma2 homolog (PNMA2) from Bos taurus (Bovine).